The chain runs to 769 residues: Protein transport protein sec39 (769 aa).

It belongs to the SEC39 family. As to quaternary structure, component of a peripheral membrane protein complex consisting of dsl1, sec39 and tip20.

The protein resides in the endoplasmic reticulum membrane. Functionally, required for protein transport between the Golgi and the endoplasmic reticulum. May contribute to tethering of coatomer-coated retrograde transport vesicles to the ER membrane through interaction with and stabilization of the SNARE complex. The chain is Protein transport protein sec39 from Schizosaccharomyces pombe (strain 972 / ATCC 24843) (Fission yeast).